Here is a 949-residue protein sequence, read N- to C-terminus: Glycine dehydrogenase (decarboxylating) (949 aa).

N6-(pyridoxal phosphate)lysine is present on Lys-702.

The protein belongs to the GcvP family. The glycine cleavage system is composed of four proteins: P, T, L and H. Pyridoxal 5'-phosphate is required as a cofactor.

It carries out the reaction N(6)-[(R)-lipoyl]-L-lysyl-[glycine-cleavage complex H protein] + glycine + H(+) = N(6)-[(R)-S(8)-aminomethyldihydrolipoyl]-L-lysyl-[glycine-cleavage complex H protein] + CO2. In terms of biological role, the glycine cleavage system catalyzes the degradation of glycine. The P protein binds the alpha-amino group of glycine through its pyridoxal phosphate cofactor; CO(2) is released and the remaining methylamine moiety is then transferred to the lipoamide cofactor of the H protein. The protein is Glycine dehydrogenase (decarboxylating) of Rhodococcoides fascians (Rhodococcus fascians).